The following is a 436-amino-acid chain: UPF0597 protein YhaM (436 aa).

This sequence belongs to the UPF0597 family.

This Shigella boydii serotype 18 (strain CDC 3083-94 / BS512) protein is UPF0597 protein YhaM.